The primary structure comprises 450 residues: tRNA-2-methylthio-N(6)-dimethylallyladenosine synthase (450 aa).

One can recognise an MTTase N-terminal domain in the interval 2-119 (KKVFVKTYGC…LPDLIARRQR (118 aa)). 6 residues coordinate [4Fe-4S] cluster: cysteine 11, cysteine 48, cysteine 82, cysteine 156, cysteine 160, and cysteine 163. The 234-residue stretch at 142 to 375 (RVEGPSAFVS…QATIEENVQR (234 aa)) folds into the Radical SAM core domain. The region spanning 378–448 (QNMVGTVQRI…PHSLRGEIVV (71 aa)) is the TRAM domain.

It belongs to the methylthiotransferase family. MiaB subfamily. As to quaternary structure, monomer. It depends on [4Fe-4S] cluster as a cofactor.

The protein resides in the cytoplasm. It carries out the reaction N(6)-dimethylallyladenosine(37) in tRNA + (sulfur carrier)-SH + AH2 + 2 S-adenosyl-L-methionine = 2-methylsulfanyl-N(6)-dimethylallyladenosine(37) in tRNA + (sulfur carrier)-H + 5'-deoxyadenosine + L-methionine + A + S-adenosyl-L-homocysteine + 2 H(+). Catalyzes the methylthiolation of N6-(dimethylallyl)adenosine (i(6)A), leading to the formation of 2-methylthio-N6-(dimethylallyl)adenosine (ms(2)i(6)A) at position 37 in tRNAs that read codons beginning with uridine. This is tRNA-2-methylthio-N(6)-dimethylallyladenosine synthase from Cupriavidus necator (strain ATCC 17699 / DSM 428 / KCTC 22496 / NCIMB 10442 / H16 / Stanier 337) (Ralstonia eutropha).